We begin with the raw amino-acid sequence, 490 residues long: Pup--protein ligase (490 aa).

Mg(2+) is bound at residue E9. ATP is bound at residue R53. Position 55 (Y55) interacts with Mg(2+). The active-site Proton acceptor is the D57. Position 63 (E63) interacts with Mg(2+). Position 66 (S66) interacts with ATP. The tract at residues 160-181 (KTHPNGGPVPGSTDPASSTGVP) is disordered. W441 is an ATP binding site.

The protein belongs to the Pup ligase/Pup deamidase family. Pup-conjugating enzyme subfamily.

The enzyme catalyses ATP + [prokaryotic ubiquitin-like protein]-L-glutamate + [protein]-L-lysine = ADP + phosphate + N(6)-([prokaryotic ubiquitin-like protein]-gamma-L-glutamyl)-[protein]-L-lysine.. It functions in the pathway protein degradation; proteasomal Pup-dependent pathway. It participates in protein modification; protein pupylation. In terms of biological role, catalyzes the covalent attachment of the prokaryotic ubiquitin-like protein modifier Pup to the proteasomal substrate proteins, thereby targeting them for proteasomal degradation. This tagging system is termed pupylation. The ligation reaction involves the side-chain carboxylate of the C-terminal glutamate of Pup and the side-chain amino group of a substrate lysine. This Rothia mucilaginosa (strain DY-18) (Stomatococcus mucilaginosus) protein is Pup--protein ligase.